The sequence spans 455 residues: Probable Xaa-Pro aminopeptidase GSTUM_00008071001 (455 aa).

4 residues coordinate Mn(2+): Asp-251, Asp-262, Glu-386, and Glu-426.

It belongs to the peptidase M24B family. Mn(2+) is required as a cofactor.

It catalyses the reaction Release of any N-terminal amino acid, including proline, that is linked to proline, even from a dipeptide or tripeptide.. Its function is as follows. Catalyzes the removal of a penultimate prolyl residue from the N-termini of peptides. In Tuber melanosporum (strain Mel28) (Perigord black truffle), this protein is Probable Xaa-Pro aminopeptidase GSTUM_00008071001.